Reading from the N-terminus, the 200-residue chain is Lipopolysaccharide core heptose(II)-phosphate phosphatase (200 aa).

The first 25 residues, 1–25 (MLAFCRSSLKSKKYFIILLALAAIA), serve as a signal peptide directing secretion.

This sequence belongs to the phosphoglycerate mutase family. Ais subfamily.

It localises to the periplasm. Its pathway is bacterial outer membrane biogenesis; lipopolysaccharide metabolism. Its function is as follows. Catalyzes the dephosphorylation of heptose(II) of the outer membrane lipopolysaccharide core. In Escherichia coli O9:H4 (strain HS), this protein is Lipopolysaccharide core heptose(II)-phosphate phosphatase.